The sequence spans 518 residues: uncharacterized protein (518 aa).

14 consecutive transmembrane segments (helical) span residues 13 to 33 (WAIS…GIIS), 49 to 69 (WGSW…PIVG), 86 to 106 (CLFG…LFLI), 109 to 129 (LIQA…ILAT), 141 to 161 (LLGA…SFLL), 169 to 189 (WLFL…ACFI), 202 to 222 (AAGI…MTNL), 231 to 251 (LGNP…AALI), 280 to 300 (LIIG…PSYV), 312 to 332 (GYWM…GGAL), 341 to 361 (TVIL…LWVT), 365 to 385 (EFVI…GAPL), 410 to 430 (IGLT…FDQI), and 493 to 513 (LYAA…IPAF).

Belongs to the major facilitator superfamily. TCR/Tet family.

The protein localises to the cell membrane. This is an uncharacterized protein from Bacillus subtilis (strain 168).